Consider the following 228-residue polypeptide: UPF0758 protein CLD_1541 (228 aa).

The region spanning 106–228 is the MPN domain; the sequence is KINTPLDVSN…YVSMKEKGTI (123 aa). Residues His177, His179, and Asp190 each contribute to the Zn(2+) site. The JAMM motif motif lies at 177-190; that stretch reads HNHPSGDPTPSKED.

This sequence belongs to the UPF0758 family.

This is UPF0758 protein CLD_1541 from Clostridium botulinum (strain Okra / Type B1).